A 160-amino-acid chain; its full sequence is SsrA-binding protein (160 aa).

Residues Met1 to Arg23 form a disordered region.

This sequence belongs to the SmpB family.

It localises to the cytoplasm. Its function is as follows. Required for rescue of stalled ribosomes mediated by trans-translation. Binds to transfer-messenger RNA (tmRNA), required for stable association of tmRNA with ribosomes. tmRNA and SmpB together mimic tRNA shape, replacing the anticodon stem-loop with SmpB. tmRNA is encoded by the ssrA gene; the 2 termini fold to resemble tRNA(Ala) and it encodes a 'tag peptide', a short internal open reading frame. During trans-translation Ala-aminoacylated tmRNA acts like a tRNA, entering the A-site of stalled ribosomes, displacing the stalled mRNA. The ribosome then switches to translate the ORF on the tmRNA; the nascent peptide is terminated with the 'tag peptide' encoded by the tmRNA and targeted for degradation. The ribosome is freed to recommence translation, which seems to be the essential function of trans-translation. This is SsrA-binding protein from Thermobifida fusca (strain YX).